The primary structure comprises 379 residues: Anhydro-N-acetylmuramic acid kinase (379 aa).

ATP is bound at residue 9–16 (GTSADGVD).

It belongs to the anhydro-N-acetylmuramic acid kinase family.

The catalysed reaction is 1,6-anhydro-N-acetyl-beta-muramate + ATP + H2O = N-acetyl-D-muramate 6-phosphate + ADP + H(+). It participates in amino-sugar metabolism; 1,6-anhydro-N-acetylmuramate degradation. Its pathway is cell wall biogenesis; peptidoglycan recycling. Functionally, catalyzes the specific phosphorylation of 1,6-anhydro-N-acetylmuramic acid (anhMurNAc) with the simultaneous cleavage of the 1,6-anhydro ring, generating MurNAc-6-P. Is required for the utilization of anhMurNAc either imported from the medium or derived from its own cell wall murein, and thus plays a role in cell wall recycling. The protein is Anhydro-N-acetylmuramic acid kinase of Parasynechococcus marenigrum (strain WH8102).